Here is a 300-residue protein sequence, read N- to C-terminus: Ribosomal protein bS6--L-glutamate ligase (300 aa).

In terms of domain architecture, ATP-grasp spans 104–287; it reads MQLLARQGID…IASKMIRWIE (184 aa). Residues Lys-141, 178-179, Asp-187, and 211-213 contribute to the ATP site; these read EY and RSN. 3 residues coordinate Mg(2+): Asp-248, Glu-260, and Asn-262. Residues Asp-248, Glu-260, and Asn-262 each coordinate Mn(2+).

Belongs to the RimK family. Mg(2+) is required as a cofactor. Mn(2+) serves as cofactor.

An L-glutamate ligase that catalyzes the ATP-dependent post-translational addition of glutamate residues to the C-terminus of ribosomal protein bS6 (RpsF). Is also able to catalyze the synthesis of poly-alpha-glutamate in vitro, via ATP hydrolysis from unprotected glutamate as substrate. The number of glutamate residues added to either RpsF or to poly-alpha-glutamate changes with pH. This Escherichia coli O81 (strain ED1a) protein is Ribosomal protein bS6--L-glutamate ligase.